A 185-amino-acid polypeptide reads, in one-letter code: MASASLQTEISKFMSYVLRHAPHEVGLTLDPEGWVPFEDLKKAVFTRFDVTDADVLEVIETNPKKRFTLMGDRIRAAQGHSVDVDLALAPATPPSQLFHGTTMESWTAIQNAGLKKMQRHHVHLSADTETAKIVAARRKGVHIILEVEAARMHSEGHSFFVTDNEVWLTDHVPSQYLSPISGAES.

It belongs to the KptA/TPT1 family.

Removes the 2'-phosphate from RNA via an intermediate in which the phosphate is ADP-ribosylated by NAD followed by a presumed transesterification to release the RNA and generate ADP-ribose 1''-2''-cyclic phosphate (APPR&gt;P). May function as an ADP-ribosylase. In Rhizobium rhizogenes (strain K84 / ATCC BAA-868) (Agrobacterium radiobacter), this protein is Probable RNA 2'-phosphotransferase.